We begin with the raw amino-acid sequence, 396 residues long: S-adenosylmethionine synthase (396 aa).

His15 is a binding site for ATP. Asp17 provides a ligand contact to Mg(2+). Glu43 is a binding site for K(+). The L-methionine site is built by Glu56 and Gln99. Positions 99–109 (QSSDIAQGVDR) are flexible loop. ATP-binding positions include 175-177 (DGK), 241-242 (RF), Asp250, 256-257 (RK), Ser273, and Lys277. Residue Asp250 coordinates L-methionine. L-methionine is bound at residue Lys281.

This sequence belongs to the AdoMet synthase family. Homotetramer; dimer of dimers. Mg(2+) serves as cofactor. Requires K(+) as cofactor.

Its subcellular location is the cytoplasm. The enzyme catalyses L-methionine + ATP + H2O = S-adenosyl-L-methionine + phosphate + diphosphate. The protein operates within amino-acid biosynthesis; S-adenosyl-L-methionine biosynthesis; S-adenosyl-L-methionine from L-methionine: step 1/1. Catalyzes the formation of S-adenosylmethionine (AdoMet) from methionine and ATP. The overall synthetic reaction is composed of two sequential steps, AdoMet formation and the subsequent tripolyphosphate hydrolysis which occurs prior to release of AdoMet from the enzyme. This is S-adenosylmethionine synthase from Pelotomaculum thermopropionicum (strain DSM 13744 / JCM 10971 / SI).